A 546-amino-acid polypeptide reads, in one-letter code: Phosphomethylpyrimidine synthase (546 aa).

Polar residues predominate over residues 1–19 (MSTPSSRSQAPETVTTGPI). The disordered stretch occupies residues 1-20 (MSTPSSRSQAPETVTTGPIQ). Substrate-binding positions include N146, M175, Y204, H240, 260–262 (SRG), 301–304 (DGLR), and E340. H344 contacts Zn(2+). A substrate-binding site is contributed by Y367. H408 is a binding site for Zn(2+). [4Fe-4S] cluster-binding residues include C488, C491, and C496.

The protein belongs to the ThiC family. [4Fe-4S] cluster serves as cofactor.

The catalysed reaction is 5-amino-1-(5-phospho-beta-D-ribosyl)imidazole + S-adenosyl-L-methionine = 4-amino-2-methyl-5-(phosphooxymethyl)pyrimidine + CO + 5'-deoxyadenosine + formate + L-methionine + 3 H(+). It functions in the pathway cofactor biosynthesis; thiamine diphosphate biosynthesis. Functionally, catalyzes the synthesis of the hydroxymethylpyrimidine phosphate (HMP-P) moiety of thiamine from aminoimidazole ribotide (AIR) in a radical S-adenosyl-L-methionine (SAM)-dependent reaction. The chain is Phosphomethylpyrimidine synthase from Mycobacteroides abscessus (strain ATCC 19977 / DSM 44196 / CCUG 20993 / CIP 104536 / JCM 13569 / NCTC 13031 / TMC 1543 / L948) (Mycobacterium abscessus).